Reading from the N-terminus, the 247-residue chain is Homeobox protein BarH-like 1b (247 aa).

Disordered stretches follow at residues 118–138 and 197–247; these read RGKLEPGGPETGSKAKKGRRS and GGGL…SQEE. A DNA-binding region (homeobox) is located at residues 135 to 194; sequence GRRSRTVFTELQLMGLEKRFEKQKYLSTPDRIDLAESLGLSQLQVKTWYQNRRMKWKKIV. The segment covering 223–234 has biased composition (basic and acidic residues); that stretch reads EQERARDAEKPP.

The protein belongs to the BAR homeobox family. In terms of assembly, interacts with serum response factor (SRF). Expressed in smooth muscle cells of the upper digestive organs and their attached arteries and to craniofacial structures.

The protein resides in the nucleus. Functionally, transcription factor which is involved with the serum response factor (SRF) in the smooth muscle cell-specific transcription of the beta-tropomyosin gene in the upper digestive organs and their attached arteries. The protein is Homeobox protein BarH-like 1b (BARX1B) of Gallus gallus (Chicken).